A 350-amino-acid polypeptide reads, in one-letter code: Arginine N-succinyltransferase (350 aa).

Residue Leu125 coordinates succinyl-CoA. The active-site Proton donor is His229.

Belongs to the arginine N-succinyltransferase family.

The catalysed reaction is succinyl-CoA + L-arginine = N(2)-succinyl-L-arginine + CoA + H(+). The protein operates within amino-acid degradation; L-arginine degradation via AST pathway; L-glutamate and succinate from L-arginine: step 1/5. Catalyzes the transfer of succinyl-CoA to arginine to produce N(2)-succinylarginine. This is Arginine N-succinyltransferase from Yersinia pseudotuberculosis serotype IB (strain PB1/+).